A 330-amino-acid polypeptide reads, in one-letter code: DNA-directed RNA polymerase subunit alpha (330 aa).

The interval 1-225 (MSDLAIPTIS…KQFASLVSHS (225 aa)) is alpha N-terminal domain (alpha-NTD). The segment at 237 to 330 (VKYTIPEEKY…KKKNKGIDED (94 aa)) is alpha C-terminal domain (alpha-CTD).

It belongs to the RNA polymerase alpha chain family. Homodimer. The RNAP catalytic core consists of 2 alpha, 1 beta, 1 beta' and 1 omega subunit. When a sigma factor is associated with the core the holoenzyme is formed, which can initiate transcription.

The enzyme catalyses RNA(n) + a ribonucleoside 5'-triphosphate = RNA(n+1) + diphosphate. DNA-dependent RNA polymerase catalyzes the transcription of DNA into RNA using the four ribonucleoside triphosphates as substrates. The chain is DNA-directed RNA polymerase subunit alpha from Dehalococcoides mccartyi (strain CBDB1).